The sequence spans 205 residues: High frequency lysogenization protein HflD homolog (205 aa).

The protein belongs to the HflD family.

The protein resides in the cytoplasm. The protein localises to the cell inner membrane. This Shewanella sp. (strain MR-7) protein is High frequency lysogenization protein HflD homolog.